The following is a 156-amino-acid chain: Large ribosomal subunit protein uL22 (156 aa).

This sequence belongs to the universal ribosomal protein uL22 family. As to quaternary structure, part of the 50S ribosomal subunit.

This protein binds specifically to 23S rRNA. It makes multiple contacts with different domains of the 23S rRNA in the assembled 50S subunit and ribosome. Functionally, the globular domain of the protein is located near the polypeptide exit tunnel on the outside of the subunit, while an extended beta-hairpin is found that lines the wall of the exit tunnel in the center of the 70S ribosome. This chain is Large ribosomal subunit protein uL22, found in Hyperthermus butylicus (strain DSM 5456 / JCM 9403 / PLM1-5).